The following is a 399-amino-acid chain: tRNA-specific 2-thiouridylase MnmA (399 aa).

ATP-binding positions include 18–25 and leucine 44; that span reads AMSGGVDS. The active-site Nucleophile is cysteine 112. Cysteine 112 and cysteine 213 are disulfide-bonded. Residue glycine 136 coordinates ATP. The tract at residues 163–165 is interaction with tRNA; that stretch reads RDQ. The Cysteine persulfide intermediate role is filled by cysteine 213.

The protein belongs to the MnmA/TRMU family.

It localises to the cytoplasm. It carries out the reaction S-sulfanyl-L-cysteinyl-[protein] + uridine(34) in tRNA + AH2 + ATP = 2-thiouridine(34) in tRNA + L-cysteinyl-[protein] + A + AMP + diphosphate + H(+). Functionally, catalyzes the 2-thiolation of uridine at the wobble position (U34) of tRNA, leading to the formation of s(2)U34. The polypeptide is tRNA-specific 2-thiouridylase MnmA (Rhizobium rhizogenes (strain K84 / ATCC BAA-868) (Agrobacterium radiobacter)).